A 64-amino-acid polypeptide reads, in one-letter code: Ferredoxin-like protein in nif region (64 aa).

Residues 2-30 (AFKIIASQCTQCGACEFECPSGAISFKTD) form the 4Fe-4S ferredoxin-type domain. Positions 10, 13, 16, 20, 39, 42, 51, and 55 each coordinate [4Fe-4S] cluster.

[4Fe-4S] cluster serves as cofactor.

The chain is Ferredoxin-like protein in nif region (fdxN) from Rhizobium leguminosarum bv. trifolii.